Reading from the N-terminus, the 241-residue chain is Uridylate kinase (241 aa).

Residue K14 to G17 participates in ATP binding. G56 lines the UMP pocket. G57 and R61 together coordinate ATP. Residues D77 and T138 to T145 contribute to the UMP site. T165, Y171, and D174 together coordinate ATP.

This sequence belongs to the UMP kinase family. In terms of assembly, homohexamer.

The protein resides in the cytoplasm. The enzyme catalyses UMP + ATP = UDP + ADP. Its pathway is pyrimidine metabolism; CTP biosynthesis via de novo pathway; UDP from UMP (UMPK route): step 1/1. Inhibited by UTP. In terms of biological role, catalyzes the reversible phosphorylation of UMP to UDP. The sequence is that of Uridylate kinase from Psychrobacter cryohalolentis (strain ATCC BAA-1226 / DSM 17306 / VKM B-2378 / K5).